The primary structure comprises 158 residues: Serine-protein kinase RsbW (158 aa).

It belongs to the anti-sigma-factor family.

The catalysed reaction is L-seryl-[protein] + ATP = O-phospho-L-seryl-[protein] + ADP + H(+). It catalyses the reaction L-threonyl-[protein] + ATP = O-phospho-L-threonyl-[protein] + ADP + H(+). Its function is as follows. Negative regulator of sigma-B activity. Phosphorylates and inactivates its specific antagonist protein, RsbV. Upon phosphorylation of RsbV, RsbW is released and binds to sigma-B, thereby blocking its ability to form an RNA polymerase holoenzyme (E-sigma-B). In Oceanobacillus iheyensis (strain DSM 14371 / CIP 107618 / JCM 11309 / KCTC 3954 / HTE831), this protein is Serine-protein kinase RsbW.